Here is a 233-residue protein sequence, read N- to C-terminus: MPDPRPLTPDQTHGRGHAEAAVDWEASRLYRLAQSERRAWTVAWAALAVTALSLIAIATMLPLKTTIPYLIEVEKSSGAASVVTQFEPRDFTPDTLMNQYWLTRYVAARERYDWHTIQHDYDYVRLLSAPAVRHDYETSYEAPDAPDRKYGAGTTLAVKILSAIDHGKGVGTVRFVRTRRDADGQGAAESSIWVATVAFAYDQPRALTQAQRWLNPLGFAVTSYRVDAEAGQP.

Residues 42–62 form a helical membrane-spanning segment; sequence VAWAALAVTALSLIAIATMLP.

The protein belongs to the virB8 family.

It localises to the cell inner membrane. The protein is Type IV secretion system protein PtlE homolog (ptlE) of Bordetella parapertussis (strain 12822 / ATCC BAA-587 / NCTC 13253).